Consider the following 262-residue polypeptide: Acyl-[acyl-carrier-protein]--UDP-N-acetylglucosamine O-acyltransferase (262 aa).

It belongs to the transferase hexapeptide repeat family. LpxA subfamily. Homotrimer.

The protein resides in the cytoplasm. The enzyme catalyses a (3R)-hydroxyacyl-[ACP] + UDP-N-acetyl-alpha-D-glucosamine = a UDP-3-O-[(3R)-3-hydroxyacyl]-N-acetyl-alpha-D-glucosamine + holo-[ACP]. The protein operates within glycolipid biosynthesis; lipid IV(A) biosynthesis; lipid IV(A) from (3R)-3-hydroxytetradecanoyl-[acyl-carrier-protein] and UDP-N-acetyl-alpha-D-glucosamine: step 1/6. Functionally, involved in the biosynthesis of lipid A, a phosphorylated glycolipid that anchors the lipopolysaccharide to the outer membrane of the cell. This chain is Acyl-[acyl-carrier-protein]--UDP-N-acetylglucosamine O-acyltransferase, found in Burkholderia thailandensis (strain ATCC 700388 / DSM 13276 / CCUG 48851 / CIP 106301 / E264).